We begin with the raw amino-acid sequence, 602 residues long: Cholinesterase (602 aa).

The signal sequence occupies residues 1-28 (MQSRSTVIYIRFVLWFLLLWVLFEKSHT). N-linked (GlcNAc...) asparagine glycans are attached at residues Asn-85 and Asn-134. 144–145 (GS) is a binding site for substrate. Ser-226 (acyl-ester intermediate) is an active-site residue. Ser-226 is modified (phosphoserine). N-linked (GlcNAc...) asparagine glycosylation is found at Asn-269 and Asn-284. Glu-353 functions as the Charge relay system in the catalytic mechanism. The N-linked (GlcNAc...) asparagine glycan is linked to Asn-369. Catalysis depends on His-466, which acts as the Charge relay system. N-linked (GlcNAc...) asparagine glycans are attached at residues Asn-483, Asn-509, Asn-513, and Asn-514.

The protein belongs to the type-B carboxylesterase/lipase family. Homotetramer; disulfide-linked. Dimer of dimers. In terms of tissue distribution, present in most cells except erythrocytes.

It is found in the secreted. It carries out the reaction an acylcholine + H2O = a carboxylate + choline + H(+). In terms of biological role, esterase with broad substrate specificity. Contributes to the inactivation of the neurotransmitter acetylcholine. Can degrade neurotoxic organophosphate esters. This is Cholinesterase (BCHE) from Bos taurus (Bovine).